A 372-amino-acid chain; its full sequence is Serine protease inhibitor 42Dd (372 aa).

The signal sequence occupies residues Met1–Cys15. Asn197 and Asn232 each carry an N-linked (GlcNAc...) asparagine glycan.

The protein belongs to the serpin family. As to expression, expressed in the ovary.

The protein resides in the secreted. Its function is as follows. Serine protease inhibitor with activity toward trypsin. Involved in innate immunity to fungal infection by negatively regulating the Toll signaling pathway and suppressing the expression of the antifungal peptide drosomycin. Acts upstream of SPE and grass, and downstream of the fungal cell wall pattern recognition receptor GNBP3. May function specifically in the GNBP3-dependent beta-1,3-glucan branch of the Toll pathway. The chain is Serine protease inhibitor 42Dd from Drosophila melanogaster (Fruit fly).